Reading from the N-terminus, the 235-residue chain is Protein C1orf43 homolog (235 aa).

The helical transmembrane segment at 11–31 (VNVVLVMAYGSLVFVLLFIFV) threads the bilayer.

It is found in the membrane. It localises to the golgi apparatus. Its subcellular location is the mitochondrion. Functionally, general regulator of phagocytosis. Required to uptake Gram negative bacterium by macrophages. The sequence is that of Protein C1orf43 homolog from Rattus norvegicus (Rat).